The sequence spans 184 residues: Thymidine kinase (184 aa).

Residues 9–16 (AAMNSGKS) and 82–85 (DEAQ) contribute to the ATP site. Catalysis depends on glutamate 83, which acts as the Proton acceptor. Positions 140, 142, 177, and 180 each coordinate Zn(2+).

It belongs to the thymidine kinase family. As to quaternary structure, homotetramer.

Its subcellular location is the cytoplasm. The enzyme catalyses thymidine + ATP = dTMP + ADP + H(+). In Chromobacterium violaceum (strain ATCC 12472 / DSM 30191 / JCM 1249 / CCUG 213 / NBRC 12614 / NCIMB 9131 / NCTC 9757 / MK), this protein is Thymidine kinase.